Consider the following 148-residue polypeptide: Peroxide-responsive repressor PerR (148 aa).

Residues Met1–Gly84 form a DNA-binding region. Zn(2+)-binding residues include Cys102, Cys105, Cys142, and Cys145.

The protein belongs to the Fur family.

The protein resides in the cytoplasm. Manganese-dependent repressor that controls a regulon of oxidative stress resistance and iron-storage proteins. May act as a hydrogen peroxide and organic hydroperoxide sensor. This Staphylococcus aureus (strain Mu50 / ATCC 700699) protein is Peroxide-responsive repressor PerR (perR).